The following is a 384-amino-acid chain: L-cysteine:1D-myo-inositol 2-amino-2-deoxy-alpha-D-glucopyranoside ligase (384 aa).

C16 is a binding site for Zn(2+). Residues 16–19 (CGIT), T31, and 54–56 (NVT) contribute to the L-cysteinyl-5'-AMP site. A 'HIGH' region motif is present at residues 18 to 28 (ITPYDATHLGH). A 'ERGGDP' region motif is present at residues 159 to 164 (ERGGDP). W199 contacts L-cysteinyl-5'-AMP. A Zn(2+)-binding site is contributed by C203. 221-223 (GSD) is an L-cysteinyl-5'-AMP binding site. H228 provides a ligand contact to Zn(2+). Residue I255 participates in L-cysteinyl-5'-AMP binding. A 'KMSKS' region motif is present at residues 261 to 265 (KMSKS).

This sequence belongs to the class-I aminoacyl-tRNA synthetase family. MshC subfamily. As to quaternary structure, monomer. Zn(2+) serves as cofactor.

The catalysed reaction is 1D-myo-inositol 2-amino-2-deoxy-alpha-D-glucopyranoside + L-cysteine + ATP = 1D-myo-inositol 2-(L-cysteinylamino)-2-deoxy-alpha-D-glucopyranoside + AMP + diphosphate + H(+). Catalyzes the ATP-dependent condensation of GlcN-Ins and L-cysteine to form L-Cys-GlcN-Ins. The sequence is that of L-cysteine:1D-myo-inositol 2-amino-2-deoxy-alpha-D-glucopyranoside ligase from Mycobacterium avium (strain 104).